The sequence spans 564 residues: Rhotekin (564 aa).

R14 bears the Omega-N-methylarginine mark. An REM-1 domain is found at 17–98 (ALEMEFKRGR…LQRRKEAQVL (82 aa)). 2 positions are modified to phosphoserine: S30 and S106. R230 is modified (asymmetric dimethylarginine). A Phosphoserine modification is found at S232. One can recognise a PH domain in the interval 309 to 416 (QPTASGALRV…WMEALWQLFF (108 aa)). A disordered region spans residues 518–564 (TFSLDAAPADHSLGPSRSVAPLPPQRSPKSRGFYSKSQLGPWLQSPV). S520, S529, and S544 each carry phosphoserine.

Interacts via its C-terminal region with the TAX1BP3 PDZ domain. This interaction facilitates Rho-mediated activation of the c-Fos serum response element (SRE). Interacts with SEPT9. Specifically binds to GTP-bound RHOA, RHOB and RHOC and inhibits their GTPase activity. Abundantly expressed in brain and kidney. Weakly expressed in lung, testis, skeletal muscle, heart and thymus.

In terms of biological role, mediates Rho signaling to activate NF-kappa-B and may confer increased resistance to apoptosis to cells in gastric tumorigenesis. May play a novel role in the organization of septin structures. This chain is Rhotekin, found in Mus musculus (Mouse).